The primary structure comprises 486 residues: Fructose dehydrogenase cytochrome subunit (486 aa).

A signal peptide spans 1-25 (MRYFRPLSATAMTTVLLLAGTNVRA). Cytochrome c domains follow at residues 38 to 142 (PSIS…MTEV), 186 to 294 (DDWN…RSVP), and 330 to 423 (TKTT…LSHF). Residues C52, C55, H56, C201, C204, H205, C343, C346, and H347 each contribute to the heme c site. A helical transmembrane segment spans residues 458-478 (LLGTGGILGAILVVAGLWWLI).

Heterotrimer composed of FdhL, FdhS and FdhC. In terms of processing, binds 3 heme c groups covalently per subunit.

The protein localises to the cell membrane. In terms of biological role, cytochrome subunit of fructose dehydrogenase, an enzyme that catalyzes the oxidation of D-fructose to produce 5-keto-D-fructose. In the complex, mediates both the electron transfer to ubiquinone and the anchoring of the complex to the membrane. The polypeptide is Fructose dehydrogenase cytochrome subunit (fdhC) (Gluconobacter japonicus).